A 64-amino-acid polypeptide reads, in one-letter code: Large ribosomal subunit protein bL35 (64 aa).

A disordered region spans residues 1–23 (MPKMKTKSGAAKRFKKTANGFKH).

Belongs to the bacterial ribosomal protein bL35 family.

The chain is Large ribosomal subunit protein bL35 from Stutzerimonas stutzeri (strain A1501) (Pseudomonas stutzeri).